An 88-amino-acid polypeptide reads, in one-letter code: Putative transmembrane protein ORF24 (88 aa).

3 helical membrane-spanning segments follow: residues 16–36, 42–62, and 64–84; these read LNMG…WAGM, AVFV…VTQF, and FIWF…VASI.

It localises to the host membrane. This is Putative transmembrane protein ORF24 from Haloarcula hispanica (His1V).